Here is a 594-residue protein sequence, read N- to C-terminus: Dual specificity protein phosphatase CDC14A (594 aa).

The tract at residues E7–E162 is a. Residues T163–E176 are linker. A b region spans residues N177–K343. Residues D179 to D336 enclose the Tyrosine-protein phosphatase domain. The active-site Phosphocysteine intermediate is the C278. The tract at residues G396–S435 is disordered. Polar residues predominate over residues S404–S413. S484 carries the phosphoserine modification. Positions N487–E560 are disordered. Positions T500–L531 are enriched in polar residues. Positions N532–S549 are enriched in low complexity. A Phosphoserine modification is found at S583.

Belongs to the protein-tyrosine phosphatase family. Non-receptor class CDC14 subfamily. As to quaternary structure, interacts with KIF20A, which is required to localize CDC14 to the midzone of the mitotic spindle.

The protein localises to the nucleus. The protein resides in the cytoplasm. It is found in the cytoskeleton. It localises to the microtubule organizing center. Its subcellular location is the centrosome. The protein localises to the spindle pole. The protein resides in the spindle. It is found in the cell projection. It localises to the kinocilium. Its subcellular location is the stereocilium. It carries out the reaction O-phospho-L-tyrosyl-[protein] + H2O = L-tyrosyl-[protein] + phosphate. The catalysed reaction is O-phospho-L-seryl-[protein] + H2O = L-seryl-[protein] + phosphate. The enzyme catalyses O-phospho-L-threonyl-[protein] + H2O = L-threonyl-[protein] + phosphate. Functionally, dual-specificity phosphatase. Required for centrosome separation and productive cytokinesis during cell division. Dephosphorylates SIRT2 around early anaphase. May dephosphorylate the APC subunit FZR1/CDH1, thereby promoting APC-FZR1 dependent degradation of mitotic cyclins and subsequent exit from mitosis. Required for normal hearing. The chain is Dual specificity protein phosphatase CDC14A (CDC14A) from Homo sapiens (Human).